We begin with the raw amino-acid sequence, 129 residues long: Large ribosomal subunit protein bL17 (129 aa).

The protein belongs to the bacterial ribosomal protein bL17 family. In terms of assembly, part of the 50S ribosomal subunit. Contacts protein L32.

The polypeptide is Large ribosomal subunit protein bL17 (Stutzerimonas stutzeri (strain A1501) (Pseudomonas stutzeri)).